We begin with the raw amino-acid sequence, 637 residues long: 1-deoxy-D-xylulose-5-phosphate synthase (637 aa).

Thiamine diphosphate contacts are provided by residues His76 and 117–119 (GHS). Asp148 lines the Mg(2+) pocket. Thiamine diphosphate-binding positions include 149-150 (GA), Asn177, Tyr294, and Glu381. Mg(2+) is bound at residue Asn177.

It belongs to the transketolase family. DXPS subfamily. In terms of assembly, homodimer. Mg(2+) is required as a cofactor. Thiamine diphosphate serves as cofactor.

The catalysed reaction is D-glyceraldehyde 3-phosphate + pyruvate + H(+) = 1-deoxy-D-xylulose 5-phosphate + CO2. It participates in metabolic intermediate biosynthesis; 1-deoxy-D-xylulose 5-phosphate biosynthesis; 1-deoxy-D-xylulose 5-phosphate from D-glyceraldehyde 3-phosphate and pyruvate: step 1/1. Functionally, catalyzes the acyloin condensation reaction between C atoms 2 and 3 of pyruvate and glyceraldehyde 3-phosphate to yield 1-deoxy-D-xylulose-5-phosphate (DXP). The polypeptide is 1-deoxy-D-xylulose-5-phosphate synthase (Neisseria meningitidis serogroup B (strain ATCC BAA-335 / MC58)).